The sequence spans 88 residues: EMBRYO SURROUNDING FACTOR 1-like protein 11 (88 aa).

An N-terminal signal peptide occupies residues 1–23 (MISSSHFAIFCIILVSLFALQQY). 4 disulfide bridges follow: cysteine 44–cysteine 59, cysteine 49–cysteine 78, cysteine 57–cysteine 74, and cysteine 60–cysteine 67.

The protein belongs to the MEG family. Expressed in stems.

In Arabidopsis thaliana (Mouse-ear cress), this protein is EMBRYO SURROUNDING FACTOR 1-like protein 11 (ESFL11).